A 384-amino-acid polypeptide reads, in one-letter code: Putative glutamate--cysteine ligase 2-1 (384 aa).

The protein belongs to the glutamate--cysteine ligase type 2 family. YbdK subfamily.

The enzyme catalyses L-cysteine + L-glutamate + ATP = gamma-L-glutamyl-L-cysteine + ADP + phosphate + H(+). Functionally, ATP-dependent carboxylate-amine ligase which exhibits weak glutamate--cysteine ligase activity. The polypeptide is Putative glutamate--cysteine ligase 2-1 (Paenarthrobacter aurescens (strain TC1)).